The following is a 508-amino-acid chain: Light-independent protochlorophyllide reductase subunit B (508 aa).

Residue Asp36 participates in [4Fe-4S] cluster binding. The active-site Proton donor is Asp294. 429-430 (GM) lines the substrate pocket.

The protein belongs to the ChlB/BchB/BchZ family. In terms of assembly, protochlorophyllide reductase is composed of three subunits; ChlL, ChlN and ChlB. Forms a heterotetramer of two ChlB and two ChlN subunits. [4Fe-4S] cluster is required as a cofactor.

The enzyme catalyses chlorophyllide a + oxidized 2[4Fe-4S]-[ferredoxin] + 2 ADP + 2 phosphate = protochlorophyllide a + reduced 2[4Fe-4S]-[ferredoxin] + 2 ATP + 2 H2O. Its pathway is porphyrin-containing compound metabolism; chlorophyll biosynthesis (light-independent). Functionally, component of the dark-operative protochlorophyllide reductase (DPOR) that uses Mg-ATP and reduced ferredoxin to reduce ring D of protochlorophyllide (Pchlide) to form chlorophyllide a (Chlide). This reaction is light-independent. The NB-protein (ChlN-ChlB) is the catalytic component of the complex. This is Light-independent protochlorophyllide reductase subunit B from Nostoc punctiforme (strain ATCC 29133 / PCC 73102).